The following is a 245-amino-acid chain: MEDRFSTITNLHGDRKQAIFGVYVGHGGVKAAECPAKNLDKNIVEEVVGKRHELEIAEAGGSSCVTALVSEGSLVVSNAGDCRAVMSVGGVAKGSLVVPRGIGDAQLKKWVIAEPETKISRVEHDHEFLILASHGLWDKVSNQEAVDIARPFCLRTEKPLLLAACKKLVDLSASRGSFDDISVMLIPLRPVRIEKRGILEDVSSSKANSIARDIAISVTRDGRFRSYLARGGPGWLLSRIEEDKR.

The PPM-type phosphatase domain maps to 1 to 188 (MEDRFSTITN…DDISVMLIPL (188 aa)).

Belongs to the PP2C family.

In Arabidopsis thaliana (Mouse-ear cress), this protein is Putative protein phosphatase 2C-like protein 45.